The primary structure comprises 360 residues: UDP-N-acetylglucosamine--N-acetylmuramyl-(pentapeptide) pyrophosphoryl-undecaprenol N-acetylglucosamine transferase (360 aa).

UDP-N-acetyl-alpha-D-glucosamine-binding residues include Ser-198 and Gln-289.

This sequence belongs to the glycosyltransferase 28 family. MurG subfamily.

It is found in the cell membrane. It carries out the reaction Mur2Ac(oyl-L-Ala-gamma-D-Glu-L-Lys-D-Ala-D-Ala)-di-trans,octa-cis-undecaprenyl diphosphate + UDP-N-acetyl-alpha-D-glucosamine = beta-D-GlcNAc-(1-&gt;4)-Mur2Ac(oyl-L-Ala-gamma-D-Glu-L-Lys-D-Ala-D-Ala)-di-trans,octa-cis-undecaprenyl diphosphate + UDP + H(+). The protein operates within cell wall biogenesis; peptidoglycan biosynthesis. Its function is as follows. Cell wall formation. Catalyzes the transfer of a GlcNAc subunit on undecaprenyl-pyrophosphoryl-MurNAc-pentapeptide (lipid intermediate I) to form undecaprenyl-pyrophosphoryl-MurNAc-(pentapeptide)GlcNAc (lipid intermediate II). The protein is UDP-N-acetylglucosamine--N-acetylmuramyl-(pentapeptide) pyrophosphoryl-undecaprenol N-acetylglucosamine transferase of Streptococcus pyogenes serotype M18 (strain MGAS8232).